The chain runs to 275 residues: MAIKTYKPYTPSRRFMTGLSSSDITSKPSVRSLLMKLPVTAGRNNNGRITSRHKEGGAKKLYRIIDFKRNKFNIEGTVSAIEYDPYRNCRIALVTYKDGEKRYIIQPTGLAVGDLVISAEGGLDIKTGYAMKLKNIPIGTIIHNIELHPGAGGQLARSAGASAQIMGREGKYTIIRMPSGEMRYILEECMATIGTVGNADFANISIGKAGRNRHRGIRPQTRGAAMNPVDHPHGGGEGKTGSSGHPVSPWGMPAKGFKTRKKKASDKLIISRRKK.

A disordered region spans residues 220–275 (QTRGAAMNPVDHPHGGGEGKTGSSGHPVSPWGMPAKGFKTRKKKASDKLIISRRKK). Basic residues predominate over residues 257–275 (FKTRKKKASDKLIISRRKK).

This sequence belongs to the universal ribosomal protein uL2 family. In terms of assembly, part of the 50S ribosomal subunit. Forms a bridge to the 30S subunit in the 70S ribosome.

Its function is as follows. One of the primary rRNA binding proteins. Required for association of the 30S and 50S subunits to form the 70S ribosome, for tRNA binding and peptide bond formation. It has been suggested to have peptidyltransferase activity; this is somewhat controversial. Makes several contacts with the 16S rRNA in the 70S ribosome. This Wolinella succinogenes (strain ATCC 29543 / DSM 1740 / CCUG 13145 / JCM 31913 / LMG 7466 / NCTC 11488 / FDC 602W) (Vibrio succinogenes) protein is Large ribosomal subunit protein uL2.